A 511-amino-acid chain; its full sequence is Activin receptor type-2B (511 aa).

The first 20 residues, 1-20, serve as a signal peptide directing secretion; the sequence is MGASVALTFLLLLATFRAGS. Residues 21-136 are Extracellular-facing; that stretch reads GHDEVETREC…KPQPSASVLN (116 aa). Cysteine 30 and cysteine 61 are joined by a disulfide. Asparagine 43 and asparagine 67 each carry an N-linked (GlcNAc...) asparagine glycan. Disulfide bonds link cysteine 86–cysteine 105, cysteine 92–cysteine 104, and cysteine 106–cysteine 111. The helical transmembrane segment at 137–157 threads the bilayer; that stretch reads ILIYSLLPIVGLSMAILLAFW. Topologically, residues 158 to 511 are cytoplasmic; it reads MYRHRKPSYG…VDLPPKESSI (354 aa). Residues 189 to 477 form the Protein kinase domain; it reads LQLLDIKARG…LSAGCVEERI (289 aa). Residues 195 to 203 and lysine 216 each bind ATP; that span reads KARGRFGCV. Aspartate 320 acts as the Proton acceptor in catalysis.

Belongs to the protein kinase superfamily. TKL Ser/Thr protein kinase family. TGFB receptor subfamily.

The protein resides in the membrane. It carries out the reaction L-threonyl-[receptor-protein] + ATP = O-phospho-L-threonyl-[receptor-protein] + ADP + H(+). The catalysed reaction is L-seryl-[receptor-protein] + ATP = O-phospho-L-seryl-[receptor-protein] + ADP + H(+). Its function is as follows. Receptor for activin A, activin B and inhibin A. Involved in transmembrane signaling. The sequence is that of Activin receptor type-2B (acvr2b) from Xenopus laevis (African clawed frog).